The primary structure comprises 482 residues: MTVRVRIAPSPTGPIHVGNVHTALFNWLFARHHGGKFILRFEDTDLERSRPEWEQVIFEDLKWLGIDWDEGPDIGGPYGPYRQTERLDLYRKYAQQLLESGHVYKCYCTKEEEDADRREAQAAGRPYQYKGRCRDLTPEQQAAFEAEGRKPVLRFRVPRGEVIRFNDLVRGPIEVPTDSIGDFIIMRANGMPLYNFAVVVDDVTMNITHVLRGEGHIPNTPVQILIYQALGFPVPEFGHLGHMTNPERGKLSKRKGEAAIRDYREQGYLPEAMLNFMSLLGWTPPGAESGREFLTKEELIREFDLSRVTKASSVFDRNKLNWMNGVYIRKKSLEEFAELALPFVVSAGLCTEEQARARWDWFKEVMAQVHERVETLAEIPQHVDIFLKDEIEMDEKAARKFLTEAVKPFFQRVSEGLRSVEWSVPAIEQLVRSIQEEMGLTPKESFQPIRVAITGRTASPGLFETIYLIGRERVLERMAPYC.

Residues 9-19 (PSPTGPIHVGN) carry the 'HIGH' region motif. Zn(2+) contacts are provided by Cys-106, Cys-108, Cys-133, and Asp-135. The 'KMSKS' region motif lies at 250-254 (KLSKR). Lys-253 lines the ATP pocket.

The protein belongs to the class-I aminoacyl-tRNA synthetase family. Glutamate--tRNA ligase type 1 subfamily. In terms of assembly, monomer. The cofactor is Zn(2+).

The protein localises to the cytoplasm. The catalysed reaction is tRNA(Glu) + L-glutamate + ATP = L-glutamyl-tRNA(Glu) + AMP + diphosphate. In terms of biological role, catalyzes the attachment of glutamate to tRNA(Glu) in a two-step reaction: glutamate is first activated by ATP to form Glu-AMP and then transferred to the acceptor end of tRNA(Glu). This is Glutamate--tRNA ligase from Symbiobacterium thermophilum (strain DSM 24528 / JCM 14929 / IAM 14863 / T).